Here is a 581-residue protein sequence, read N- to C-terminus: Kelch-like protein 30 (581 aa).

The BTB domain maps to 33-100; sequence ADVTLLVGDQ…VYTGRLTITQ (68 aa). The 103-residue stretch at 135–237 folds into the BACK domain; that stretch reads CLGICEFGEQ…PRPCVQQLLA (103 aa). Kelch repeat units follow at residues 280–327, 328–378, 379–423, 425–472, 474–514, and 515–564; these read EEDE…ALNS, DVYV…ALNG, EIYA…GCQG, LYLV…ALNG, LYLI…PLGD, and LLYV…TIFL.

This chain is Kelch-like protein 30 (Klhl30), found in Mus musculus (Mouse).